The sequence spans 124 residues: Non-specific lipid-transfer protein (124 aa).

A signal peptide spans 1–26 (MANSGVMKLVCLVLACMVVAAPLAEA). Intrachain disulfides connect Cys30-Cys77, Cys40-Cys54, Cys55-Cys100, and Cys75-Cys114.

The protein belongs to the plant LTP family.

In terms of biological role, plant non-specific lipid-transfer proteins transfer phospholipids as well as galactolipids across membranes. May play a role in wax or cutin deposition in the cell walls of expanding epidermal cells and certain secretory tissues. The polypeptide is Non-specific lipid-transfer protein (Macadamia integrifolia (Macadamia nut)).